A 175-amino-acid polypeptide reads, in one-letter code: Adenine phosphoribosyltransferase (175 aa).

This sequence belongs to the purine/pyrimidine phosphoribosyltransferase family. Homodimer.

It localises to the cytoplasm. It carries out the reaction AMP + diphosphate = 5-phospho-alpha-D-ribose 1-diphosphate + adenine. It participates in purine metabolism; AMP biosynthesis via salvage pathway; AMP from adenine: step 1/1. Functionally, catalyzes a salvage reaction resulting in the formation of AMP, that is energically less costly than de novo synthesis. The protein is Adenine phosphoribosyltransferase of Oenococcus oeni (strain ATCC BAA-331 / PSU-1).